Consider the following 338-residue polypeptide: Aspartate-semialdehyde dehydrogenase (338 aa).

NADP(+) contacts are provided by residues Ser-13 to Val-16 and Arg-41 to Ser-42. Residue Arg-101 coordinates phosphate. Residue Cys-132 is the Acyl-thioester intermediate of the active site. A substrate-binding site is contributed by Gln-159. NADP(+)-binding positions include Ser-162–Gly-163 and Pro-187. Lys-216 is a binding site for phosphate. Residue Arg-238 coordinates substrate. His-245 serves as the catalytic Proton acceptor. Asn-317 is a binding site for NADP(+).

Belongs to the aspartate-semialdehyde dehydrogenase family. In terms of assembly, homodimer.

The enzyme catalyses L-aspartate 4-semialdehyde + phosphate + NADP(+) = 4-phospho-L-aspartate + NADPH + H(+). It participates in amino-acid biosynthesis; L-lysine biosynthesis via DAP pathway; (S)-tetrahydrodipicolinate from L-aspartate: step 2/4. It functions in the pathway amino-acid biosynthesis; L-methionine biosynthesis via de novo pathway; L-homoserine from L-aspartate: step 2/3. Its pathway is amino-acid biosynthesis; L-threonine biosynthesis; L-threonine from L-aspartate: step 2/5. Its function is as follows. Catalyzes the NADPH-dependent formation of L-aspartate-semialdehyde (L-ASA) by the reductive dephosphorylation of L-aspartyl-4-phosphate. This is Aspartate-semialdehyde dehydrogenase from Shewanella sp. (strain DB6705).